Consider the following 194-residue polypeptide: MLSSTLRVAVVCVSNVNRSMEAHSILRKKGLSVRSFGTESHVRLPGPRPNRPVVYDFATTYKEMYNDLLRKDRECYTRNGILHILGRNERIKPGPERFQECTDFFDVIFTCEESVYDTVVEDLCSREQQTFQPVHVINMEIQDTLEDATLGAFLICEICQCLQQSDDMEDNLEELLLQMEEKAGKSFLHTVCFY.

Belongs to the SSU72 phosphatase family.

It is found in the nucleus. It catalyses the reaction O-phospho-L-seryl-[protein] + H2O = L-seryl-[protein] + phosphate. It carries out the reaction O-phospho-L-threonyl-[protein] + H2O = L-threonyl-[protein] + phosphate. Protein phosphatase that catalyzes the dephosphorylation of the C-terminal domain of RNA polymerase II. Plays a role in RNA processing and termination. The chain is RNA polymerase II subunit A C-terminal domain phosphatase SSU72 like protein 2 from Homo sapiens (Human).